A 1100-amino-acid polypeptide reads, in one-letter code: DNA-directed RNA polymerase subunit beta (1100 aa).

The tract at residues 1064-1100 (YEEDKEVDLMADVNQRRTPSRPTYESMSVGDIDDDDD) is disordered. Polar residues predominate over residues 1079–1089 (RRTPSRPTYES).

Belongs to the RNA polymerase beta chain family. In terms of assembly, in cyanobacteria the RNAP catalytic core is composed of 2 alpha, 1 beta, 1 beta', 1 gamma and 1 omega subunit. When a sigma factor is associated with the core the holoenzyme is formed, which can initiate transcription.

The enzyme catalyses RNA(n) + a ribonucleoside 5'-triphosphate = RNA(n+1) + diphosphate. Functionally, DNA-dependent RNA polymerase catalyzes the transcription of DNA into RNA using the four ribonucleoside triphosphates as substrates. The sequence is that of DNA-directed RNA polymerase subunit beta from Synechococcus elongatus (strain ATCC 33912 / PCC 7942 / FACHB-805) (Anacystis nidulans R2).